A 242-amino-acid polypeptide reads, in one-letter code: Anamorsin homolog (242 aa).

The interval 1-140 (MMNFADTLVI…NVTAENPDFL (140 aa)) is N-terminal SAM-like domain. The segment at 141 to 162 (SNEDDDEGNSSDGEAYQNAEDN) is linker. [4Fe-4S] cluster-binding residues include Cys205, Cys208, Cys216, and Cys219. 2 consecutive short sequence motifs (cx2C motif) follow at residues 205–208 (CGNC) and 216–219 (CASC). Positions 205 to 219 (CGNCYLGDAFRCASC) are fe-S binding site B.

It belongs to the anamorsin family. In terms of assembly, monomer. [4Fe-4S] cluster is required as a cofactor.

Its subcellular location is the cytoplasm. The protein resides in the mitochondrion intermembrane space. Its function is as follows. Component of the cytosolic iron-sulfur (Fe-S) protein assembly (CIA) machinery. Required for the maturation of extramitochondrial Fe-S proteins. Part of an electron transfer chain functioning in an early step of cytosolic Fe-S biogenesis, facilitating the de novo assembly of a [4Fe-4S] cluster on the cytosolic Fe-S scaffold complex. Electrons are transferred from NADPH via a FAD- and FMN-containing diflavin oxidoreductase. Together with the diflavin oxidoreductase, also required for the assembly of the diferric tyrosyl radical cofactor of ribonucleotide reductase (RNR), probably by providing electrons for reduction during radical cofactor maturation in the catalytic small subunit. This Plasmodium knowlesi (strain H) protein is Anamorsin homolog.